Here is a 451-residue protein sequence, read N- to C-terminus: uncharacterized protein (451 aa).

11 helical membrane-spanning segments follow: residues 13–33 (IGFV…WKFP), 41–61 (GGAF…PLLV), 97–117 (ACFL…LYIV), 142–162 (NPVQ…LVVA), 174–194 (AVMM…SLTL), 217–237 (ILFA…VMVT), 255–275 (IVLM…PAVF), 299–319 (LPFG…AALT), 345–365 (WTSG…YGVL), 381–401 (FTVS…FIPL), and 429–449 (LLRF…IGIL).

This sequence belongs to the sodium:neurotransmitter symporter (SNF) (TC 2.A.22) family.

It is found in the cell membrane. Functionally, putative sodium-dependent transporter. This is an uncharacterized protein from Bacillus subtilis (strain 168).